Here is a 574-residue protein sequence, read N- to C-terminus: K(+)/H(+) antiporter NhaP2 (574 aa).

A run of 13 helical transmembrane segments spans residues 6–26 (INSF…LSPM), 30–50 (LGIP…EDGL), 58–78 (YSTA…DGGM), 87–107 (VALW…TSIT), 109–129 (LMAA…GAIV), 173–193 (IAIL…VSFI), 196–216 (FGLG…LVNL), 219–239 (LAEG…YAVS), 242–262 (LGGS…NKPT), 271–291 (VLDG…GLLL), 299–319 (ILLP…PLAV), 335–355 (WFIS…VFPM), and 359–379 (LPGA…SLLI). Residues 405–486 (SGVEIYPSSE…LDALSHLFSQ (82 aa)) form the RCK C-terminal domain.

This sequence belongs to the monovalent cation:proton antiporter 1 (CPA1) transporter (TC 2.A.36) family. NhaP2 subfamily.

The protein resides in the cell inner membrane. The catalysed reaction is K(+)(in) + H(+)(out) = K(+)(out) + H(+)(in). In terms of biological role, k(+)/H(+) antiporter that extrudes potassium in exchange for external protons and maintains the internal concentration of potassium under toxic levels. The protein is K(+)/H(+) antiporter NhaP2 of Shewanella sp. (strain W3-18-1).